Consider the following 631-residue polypeptide: Chaperone protein DnaK (631 aa).

Position 197 is a phosphothreonine; by autocatalysis (T197). The disordered stretch occupies residues 599–631 (AQSDAGAAGSASEENTTSNEKVVDADFEDVEKK). Residues 603 to 612 (AGAAGSASEE) are compositionally biased toward low complexity.

This sequence belongs to the heat shock protein 70 family.

In terms of biological role, acts as a chaperone. The sequence is that of Chaperone protein DnaK from Rickettsia bellii (strain RML369-C).